The primary structure comprises 320 residues: MTDASGSERLKRTKDISESTPPSSLPDHLIRATAAEGKIRVVGLVSTQAVQEARERHKLSYVATVALGRAMSAALLLAANLKRRQARINLQLKGNGPLGGIYVDAGMDGTVRGYVSNPAIELPLTPESKLDVGQAVGRYGYLHVLRDLGYGQPYTSAVELVSGEVGDDISYYLSSSEQIPSAVLLGVNLDSQRVRAAGGVLMQLMPGAPASLIPEMEARLAKVEEFSPMLAYGGGLRELLQICLGDLDLKIAPEVRTIRFYCQCNSDRVKGALRMLGRDELIDMIRTDKGAEAVCQFCNEVYRISEDELRSIVAEMSANP.

Over residues 1–17 (MTDASGSERLKRTKDIS) the composition is skewed to basic and acidic residues. A disordered region spans residues 1–27 (MTDASGSERLKRTKDISESTPPSSLPD). Intrachain disulfides connect Cys-262–Cys-264 and Cys-295–Cys-298.

This sequence belongs to the HSP33 family. Under oxidizing conditions two disulfide bonds are formed involving the reactive cysteines. Under reducing conditions zinc is bound to the reactive cysteines and the protein is inactive.

It is found in the cytoplasm. Functionally, redox regulated molecular chaperone. Protects both thermally unfolding and oxidatively damaged proteins from irreversible aggregation. Plays an important role in the bacterial defense system toward oxidative stress. The protein is 33 kDa chaperonin of Synechococcus sp. (strain JA-3-3Ab) (Cyanobacteria bacterium Yellowstone A-Prime).